Consider the following 261-residue polypeptide: Cytochrome c oxidase subunit 3 (261 aa).

Residues 1 to 15 lie on the Mitochondrial matrix side of the membrane; it reads MTHQTHAYHMVNPSP. Residues 16–34 traverse the membrane as a helical segment; sequence WPLTGALSALLMTSGLAMW. Over 35–40 the chain is Mitochondrial intermembrane; sequence FHYNSM. Residues 41–66 traverse the membrane as a helical segment; sequence LLLTLGLMTNLLTMYQWWRDIVREST. The Mitochondrial matrix portion of the chain corresponds to 67-72; the sequence is FQGHHT. A helical transmembrane segment spans residues 73 to 105; the sequence is LVVQKGLRYGMILFIISEVFFFSGFFWAFYHSS. Over 106–128 the chain is Mitochondrial intermembrane; that stretch reads LAPTPELGGCWPPTGIHPLNPME. A helical membrane pass occupies residues 129-152; it reads VPLLNTSVLLASGVSITWAHHSLM. Over 153-155 the chain is Mitochondrial matrix; sequence EGN. The chain crosses the membrane as a helical span at residues 156 to 183; it reads RKHMLQALFITISLGVYFTLLQASEYYE. The Mitochondrial intermembrane portion of the chain corresponds to 184–190; it reads APFTISD. A helical transmembrane segment spans residues 191-223; it reads GIYGSTFFVATGFHGLHVIIGSTFLIVCFLRQL. Residues 224 to 232 are Mitochondrial matrix-facing; that stretch reads KFHFTSNHH. A helical transmembrane segment spans residues 233–256; sequence FGFEAAAWYWHFVDVVWLFLYVSI. Residues 257–261 are Mitochondrial intermembrane-facing; that stretch reads YWWGS.

This sequence belongs to the cytochrome c oxidase subunit 3 family. As to quaternary structure, component of the cytochrome c oxidase (complex IV, CIV), a multisubunit enzyme composed of 14 subunits. The complex is composed of a catalytic core of 3 subunits MT-CO1, MT-CO2 and MT-CO3, encoded in the mitochondrial DNA, and 11 supernumerary subunits COX4I, COX5A, COX5B, COX6A, COX6B, COX6C, COX7A, COX7B, COX7C, COX8 and NDUFA4, which are encoded in the nuclear genome. The complex exists as a monomer or a dimer and forms supercomplexes (SCs) in the inner mitochondrial membrane with NADH-ubiquinone oxidoreductase (complex I, CI) and ubiquinol-cytochrome c oxidoreductase (cytochrome b-c1 complex, complex III, CIII), resulting in different assemblies (supercomplex SCI(1)III(2)IV(1) and megacomplex MCI(2)III(2)IV(2)).

It is found in the mitochondrion inner membrane. It carries out the reaction 4 Fe(II)-[cytochrome c] + O2 + 8 H(+)(in) = 4 Fe(III)-[cytochrome c] + 2 H2O + 4 H(+)(out). In terms of biological role, component of the cytochrome c oxidase, the last enzyme in the mitochondrial electron transport chain which drives oxidative phosphorylation. The respiratory chain contains 3 multisubunit complexes succinate dehydrogenase (complex II, CII), ubiquinol-cytochrome c oxidoreductase (cytochrome b-c1 complex, complex III, CIII) and cytochrome c oxidase (complex IV, CIV), that cooperate to transfer electrons derived from NADH and succinate to molecular oxygen, creating an electrochemical gradient over the inner membrane that drives transmembrane transport and the ATP synthase. Cytochrome c oxidase is the component of the respiratory chain that catalyzes the reduction of oxygen to water. Electrons originating from reduced cytochrome c in the intermembrane space (IMS) are transferred via the dinuclear copper A center (CU(A)) of subunit 2 and heme A of subunit 1 to the active site in subunit 1, a binuclear center (BNC) formed by heme A3 and copper B (CU(B)). The BNC reduces molecular oxygen to 2 water molecules using 4 electrons from cytochrome c in the IMS and 4 protons from the mitochondrial matrix. The protein is Cytochrome c oxidase subunit 3 (MT-CO3) of Ceratotherium simum (White rhinoceros).